Reading from the N-terminus, the 427-residue chain is Glutamate-1-semialdehyde 2,1-aminomutase (427 aa).

Residue Lys265 is modified to N6-(pyridoxal phosphate)lysine.

The protein belongs to the class-III pyridoxal-phosphate-dependent aminotransferase family. HemL subfamily. Homodimer. Pyridoxal 5'-phosphate is required as a cofactor.

The protein resides in the cytoplasm. It catalyses the reaction (S)-4-amino-5-oxopentanoate = 5-aminolevulinate. The protein operates within porphyrin-containing compound metabolism; protoporphyrin-IX biosynthesis; 5-aminolevulinate from L-glutamyl-tRNA(Glu): step 2/2. This chain is Glutamate-1-semialdehyde 2,1-aminomutase, found in Neisseria meningitidis serogroup C / serotype 2a (strain ATCC 700532 / DSM 15464 / FAM18).